The chain runs to 289 residues: Xyloglucan endotransglucosylase/hydrolase protein 15 (289 aa).

The signal sequence occupies residues 1–25 (MGPSSSLTTIVATVLLVTLFGSAYA). Positions 26–216 (SNFFDEFDLT…WSKAPFTAYY (191 aa)) constitute a GH16 domain. The active-site Nucleophile is the Glu102. Glu106 functions as the Proton donor in the catalytic mechanism. Glu106 serves as a coordination point for xyloglucan. Asn110 is a glycosylation site (N-linked (GlcNAc...) asparagine). Residues 119–121 (HTN), 129–131 (DRE), 195–196 (DW), and Gly200 each bind xyloglucan. Cystine bridges form between Cys224/Cys230 and Cys270/Cys284. A xyloglucan-binding site is contributed by Arg275.

It belongs to the glycosyl hydrolase 16 family. XTH group 2 subfamily. Post-translationally, contains at least one intrachain disulfide bond essential for its enzymatic activity. As to expression, strongly expressed in roots, hypocotyls and cotyledons. Aslo detected in inflorescence stems and in the carpels and styles in flowers.

The protein localises to the secreted. It is found in the cell wall. It localises to the extracellular space. Its subcellular location is the apoplast. It carries out the reaction breaks a beta-(1-&gt;4) bond in the backbone of a xyloglucan and transfers the xyloglucanyl segment on to O-4 of the non-reducing terminal glucose residue of an acceptor, which can be a xyloglucan or an oligosaccharide of xyloglucan.. It catalyses the reaction xyloglucan + H2O = xyloglucan oligosaccharides.. Its function is as follows. Catalyzes xyloglucan endohydrolysis (XEH) and/or endotransglycosylation (XET). Cleaves and religates xyloglucan polymers, an essential constituent of the primary cell wall, and thereby participates in cell wall construction of growing tissues. Has a high XET activity, but little or no XEH activity in vitro. Acceptor preferences are XXXGol &gt; XLLGol = XLFGol &gt; XXLGol &gt; XXFGol. The sequence is that of Xyloglucan endotransglucosylase/hydrolase protein 15 from Arabidopsis thaliana (Mouse-ear cress).